The chain runs to 274 residues: Proteasome subunit beta type-5-A (274 aa).

The propeptide at 1–57 (MKLDTSGFETSMPMIGFGSSSDMLDELSSVPSFDLPRTKEFDGFQKKAKDMLKHAKG) is removed in mature form. Catalysis depends on Thr-58, which acts as the Nucleophile.

The protein belongs to the peptidase T1B family. Component of the 20S core complex of the 26S proteasome. The 26S proteasome is composed of a core protease (CP), known as the 20S proteasome, capped at one or both ends by the 19S regulatory particle (RP/PA700). The 20S proteasome core is composed of 28 subunits that are arranged in four stacked rings, resulting in a barrel-shaped structure. The two end rings are each formed by seven alpha subunits, and the two central rings are each formed by seven beta subunits. The catalytic chamber with the active sites is on the inside of the barrel. In terms of tissue distribution, ubiquitous low levels, higher expression in siliques and flowers.

It localises to the cytoplasm. It is found in the nucleus. It catalyses the reaction Cleavage of peptide bonds with very broad specificity.. Its function is as follows. The proteasome is a multicatalytic proteinase complex which is characterized by its ability to cleave peptides with Arg, Phe, Tyr, Leu, and Glu adjacent to the leaving group at neutral or slightly basic pH. The proteasome has an ATP-dependent proteolytic activity. This chain is Proteasome subunit beta type-5-A (PBE1), found in Arabidopsis thaliana (Mouse-ear cress).